The chain runs to 63 residues: Adipokinetic prohormone type 1 (63 aa).

Positions 1-22 (MVQRCLVVALLVVVVAAALCSA) are cleaved as a signal peptide. Gln23 carries the pyrrolidone carboxylic acid modification. The residue at position 32 (Thr32) is a Threonine amide.

The protein belongs to the AKH/HRTH/RPCH family. Adipokinetic hormone precursor-related peptide (APRP) can form three type of disulfide-bond dimers: p1 (alpha-alpha), p2 (alpha-beta), and p3 (beta-beta).

It is found in the secreted. Its function is as follows. This hormone, released from cells in the corpora cardiaca, causes release of diglycerides from the fat body and stimulation of muscles to use these diglycerides as an energy source during energy-demanding processes. The polypeptide is Adipokinetic prohormone type 1 (Schistocerca nitens (Vagrant locust)).